The following is a 332-amino-acid chain: Ribosomal RNA small subunit methyltransferase C (332 aa).

This sequence belongs to the methyltransferase superfamily. RsmC family. Monomer.

It is found in the cytoplasm. It carries out the reaction guanosine(1207) in 16S rRNA + S-adenosyl-L-methionine = N(2)-methylguanosine(1207) in 16S rRNA + S-adenosyl-L-homocysteine + H(+). Its function is as follows. Specifically methylates the guanine in position 1207 of 16S rRNA in the 30S particle. In Pseudomonas syringae pv. syringae (strain B728a), this protein is Ribosomal RNA small subunit methyltransferase C.